Here is a 582-residue protein sequence, read N- to C-terminus: TRAF-type zinc finger domain-containing protein 1 (582 aa).

A2 bears the N-acetylalanine mark. The segment at I27–K103 adopts a TRAF-type zinc-finger fold. S191 is subject to Phosphoserine. The tract at residues E216–A238 is disordered. Phosphoserine is present on residues S278, S320, S326, S327, S409, S415, S430, and S470. 2 disordered regions span residues E402 to G509 and P522 to E582. Composition is skewed to polar residues over residues P454 to G471 and L486 to G504.

In terms of assembly, interacts with MAVS, TICAM1, TRAF1, TRAF2, TRAF3 and TRAF6.

In terms of biological role, negative feedback regulator that controls excessive innate immune responses. Regulates both Toll-like receptor 4 (TLR4) and DDX58/RIG1-like helicases (RLH) pathways. May inhibit the LTR pathway by direct interaction with TRAF6 and attenuation of NF-kappa-B activation. May negatively regulate the RLH pathway downstream from MAVS and upstream of NF-kappa-B and IRF3. The polypeptide is TRAF-type zinc finger domain-containing protein 1 (TRAFD1) (Macaca fascicularis (Crab-eating macaque)).